The sequence spans 401 residues: Cartilage-associated protein (401 aa).

The N-terminal stretch at 1-26 is a signal peptide; sequence MEPGRRGAAALLALLCVACALRAGRA. N-linked (GlcNAc...) asparagine glycosylation is found at Asn87 and Asn363.

This sequence belongs to the leprecan family. As to expression, found in articular chondrocytes. Expressed in a variety of tissues.

The protein localises to the secreted. It localises to the extracellular space. Its subcellular location is the extracellular matrix. In terms of biological role, necessary for efficient 3-hydroxylation of fibrillar collagen prolyl residues. In Homo sapiens (Human), this protein is Cartilage-associated protein (CRTAP).